A 205-amino-acid polypeptide reads, in one-letter code: Cytochrome c oxidase subunit 2 (205 aa).

Cu cation contacts are provided by His-115, Cys-150, Glu-152, Cys-154, His-158, and Met-161. A Mg(2+)-binding site is contributed by Glu-152.

It belongs to the cytochrome c oxidase subunit 2 family. In terms of assembly, component of the cytochrome c oxidase (complex IV, CIV), a multisubunit enzyme composed of a catalytic core of 3 subunits and several supernumerary subunits. The complex exists as a monomer or a dimer and forms supercomplexes (SCs) in the inner mitochondrial membrane with ubiquinol-cytochrome c oxidoreductase (cytochrome b-c1 complex, complex III, CIII). It depends on Cu cation as a cofactor.

Its subcellular location is the mitochondrion inner membrane. It catalyses the reaction 4 Fe(II)-[cytochrome c] + O2 + 8 H(+)(in) = 4 Fe(III)-[cytochrome c] + 2 H2O + 4 H(+)(out). Its function is as follows. Component of the cytochrome c oxidase, the last enzyme in the mitochondrial electron transport chain which drives oxidative phosphorylation. The respiratory chain contains 3 multisubunit complexes succinate dehydrogenase (complex II, CII), ubiquinol-cytochrome c oxidoreductase (cytochrome b-c1 complex, complex III, CIII) and cytochrome c oxidase (complex IV, CIV), that cooperate to transfer electrons derived from NADH and succinate to molecular oxygen, creating an electrochemical gradient over the inner membrane that drives transmembrane transport and the ATP synthase. Cytochrome c oxidase is the component of the respiratory chain that catalyzes the reduction of oxygen to water. Electrons originating from reduced cytochrome c in the intermembrane space (IMS) are transferred via the dinuclear copper A center (CU(A)) of subunit 2 and heme A of subunit 1 to the active site in subunit 1, a binuclear center (BNC) formed by heme A3 and copper B (CU(B)). The BNC reduces molecular oxygen to 2 water molecules using 4 electrons from cytochrome c in the IMS and 4 protons from the mitochondrial matrix. The protein is Cytochrome c oxidase subunit 2 (COII) of Paramecium tetraurelia.